The chain runs to 623 residues: Aspartate--tRNA(Asp/Asn) ligase (623 aa).

An L-aspartate-binding site is contributed by Glu175. The tract at residues 199–202 (QQYK) is aspartate. Residues Arg221 and His483 each contribute to the L-aspartate site. Residue 221–223 (RDE) participates in ATP binding. Glu517 serves as a coordination point for ATP. Arg524 is an L-aspartate binding site. 569–572 (GVDR) provides a ligand contact to ATP.

It belongs to the class-II aminoacyl-tRNA synthetase family. Type 1 subfamily. Homodimer.

It localises to the cytoplasm. It catalyses the reaction tRNA(Asx) + L-aspartate + ATP = L-aspartyl-tRNA(Asx) + AMP + diphosphate. Functionally, aspartyl-tRNA synthetase with relaxed tRNA specificity since it is able to aspartylate not only its cognate tRNA(Asp) but also tRNA(Asn). Reaction proceeds in two steps: L-aspartate is first activated by ATP to form Asp-AMP and then transferred to the acceptor end of tRNA(Asp/Asn). This Xanthobacter autotrophicus (strain ATCC BAA-1158 / Py2) protein is Aspartate--tRNA(Asp/Asn) ligase.